The sequence spans 105 residues: Small ribosomal subunit protein uS10 (105 aa).

Belongs to the universal ribosomal protein uS10 family. In terms of assembly, part of the 30S ribosomal subunit.

Functionally, involved in the binding of tRNA to the ribosomes. In Chlamydia pneumoniae (Chlamydophila pneumoniae), this protein is Small ribosomal subunit protein uS10.